The sequence spans 485 residues: D-alanine--D-alanyl carrier protein ligase (485 aa).

ATP is bound at residue 144–145 (TS). Asp189 contributes to the D-alanine binding site. 284–289 (NTYGPT) contributes to the ATP binding site. Val293 is a binding site for D-alanine. Asp365 and Lys473 together coordinate ATP. Lys473 lines the D-alanine pocket.

This sequence belongs to the ATP-dependent AMP-binding enzyme family. DltA subfamily.

Its subcellular location is the cytoplasm. The catalysed reaction is holo-[D-alanyl-carrier protein] + D-alanine + ATP = D-alanyl-[D-alanyl-carrier protein] + AMP + diphosphate. It functions in the pathway cell wall biogenesis; lipoteichoic acid biosynthesis. In terms of biological role, catalyzes the first step in the D-alanylation of lipoteichoic acid (LTA), the activation of D-alanine and its transfer onto the D-alanyl carrier protein (Dcp) DltC. In an ATP-dependent two-step reaction, forms a high energy D-alanyl-AMP intermediate, followed by transfer of the D-alanyl residue as a thiol ester to the phosphopantheinyl prosthetic group of the Dcp. D-alanylation of LTA plays an important role in modulating the properties of the cell wall in Gram-positive bacteria, influencing the net charge of the cell wall. The polypeptide is D-alanine--D-alanyl carrier protein ligase (Staphylococcus aureus (strain USA300)).